Here is an 81-residue protein sequence, read N- to C-terminus: ATP synthase subunit c (81 aa).

The next 2 helical transmembrane spans lie at 4 to 24 (MIAQGALIGGGLIMAGGAIGA) and 57 to 77 (VGLVEAAYFINLAFMALFVFA).

The protein belongs to the ATPase C chain family. In terms of assembly, F-type ATPases have 2 components, F(1) - the catalytic core - and F(0) - the membrane proton channel. F(1) has five subunits: alpha(3), beta(3), gamma(1), delta(1), epsilon(1). F(0) has three main subunits: a(1), b(2) and c(10-14). The alpha and beta chains form an alternating ring which encloses part of the gamma chain. F(1) is attached to F(0) by a central stalk formed by the gamma and epsilon chains, while a peripheral stalk is formed by the delta and b chains.

It localises to the cell membrane. Its function is as follows. F(1)F(0) ATP synthase produces ATP from ADP in the presence of a proton or sodium gradient. F-type ATPases consist of two structural domains, F(1) containing the extramembraneous catalytic core and F(0) containing the membrane proton channel, linked together by a central stalk and a peripheral stalk. During catalysis, ATP synthesis in the catalytic domain of F(1) is coupled via a rotary mechanism of the central stalk subunits to proton translocation. Key component of the F(0) channel; it plays a direct role in translocation across the membrane. A homomeric c-ring of between 10-14 subunits forms the central stalk rotor element with the F(1) delta and epsilon subunits. The protein is ATP synthase subunit c of Mycobacterium leprae (strain TN).